The primary structure comprises 226 residues: ATP synthase F(0) complex subunit a (226 aa).

5 helical membrane-spanning segments follow: residues Leu-5–Ile-25, Trp-68–Leu-88, Gln-97–Phe-117, Phe-136–Trp-156, and Ala-189–Ile-209.

This sequence belongs to the ATPase A chain family. As to quaternary structure, component of the ATP synthase complex composed at least of ATP5F1A/subunit alpha, ATP5F1B/subunit beta, ATP5MC1/subunit c (homooctomer), MT-ATP6/subunit a, MT-ATP8/subunit 8, ATP5ME/subunit e, ATP5MF/subunit f, ATP5MG/subunit g, ATP5MK/subunit k, ATP5MJ/subunit j, ATP5F1C/subunit gamma, ATP5F1D/subunit delta, ATP5F1E/subunit epsilon, ATP5PF/subunit F6, ATP5PB/subunit b, ATP5PD/subunit d, ATP5PO/subunit OSCP. ATP synthase complex consists of a soluble F(1) head domain (subunits alpha(3) and beta(3)) - the catalytic core - and a membrane F(0) domain - the membrane proton channel (subunits c, a, 8, e, f, g, k and j). These two domains are linked by a central stalk (subunits gamma, delta, and epsilon) rotating inside the F1 region and a stationary peripheral stalk (subunits F6, b, d, and OSCP). Interacts with DNAJC30; interaction is direct.

It localises to the mitochondrion inner membrane. The catalysed reaction is H(+)(in) = H(+)(out). Subunit a, of the mitochondrial membrane ATP synthase complex (F(1)F(0) ATP synthase or Complex V) that produces ATP from ADP in the presence of a proton gradient across the membrane which is generated by electron transport complexes of the respiratory chain. ATP synthase complex consist of a soluble F(1) head domain - the catalytic core - and a membrane F(1) domain - the membrane proton channel. These two domains are linked by a central stalk rotating inside the F(1) region and a stationary peripheral stalk. During catalysis, ATP synthesis in the catalytic domain of F(1) is coupled via a rotary mechanism of the central stalk subunits to proton translocation. With the subunit c (ATP5MC1), forms the proton-conducting channel in the F(0) domain, that contains two crucial half-channels (inlet and outlet) that facilitate proton movement from the mitochondrial intermembrane space (IMS) into the matrix. Protons are taken up via the inlet half-channel and released through the outlet half-channel, following a Grotthuss mechanism. In Balaenoptera physalus (Fin whale), this protein is ATP synthase F(0) complex subunit a.